The chain runs to 273 residues: NH(3)-dependent NAD(+) synthetase (273 aa).

Residue 46 to 53 participates in ATP binding; the sequence is GISGGQDS. Aspartate 52 contributes to the Mg(2+) binding site. A deamido-NAD(+)-binding site is contributed by arginine 139. Position 159 (threonine 159) interacts with ATP. Glutamate 164 contacts Mg(2+). Positions 172 and 179 each coordinate deamido-NAD(+). Positions 188 and 210 each coordinate ATP. 259–260 is a binding site for deamido-NAD(+); the sequence is HK.

This sequence belongs to the NAD synthetase family. In terms of assembly, homodimer.

It carries out the reaction deamido-NAD(+) + NH4(+) + ATP = AMP + diphosphate + NAD(+) + H(+). It functions in the pathway cofactor biosynthesis; NAD(+) biosynthesis; NAD(+) from deamido-NAD(+) (ammonia route): step 1/1. In terms of biological role, catalyzes the ATP-dependent amidation of deamido-NAD to form NAD. Uses ammonia as a nitrogen source. This Streptococcus agalactiae serotype Ia (strain ATCC 27591 / A909 / CDC SS700) protein is NH(3)-dependent NAD(+) synthetase.